We begin with the raw amino-acid sequence, 145 residues long: Synaptojanin-2-binding protein (145 aa).

Over 1 to 117 (MNGRVDYLVS…VHRGDGEPSG (117 aa)) the chain is Cytoplasmic. Residues 13–100 (EINLTRGPSG…AVSLRVQHRL (88 aa)) enclose the PDZ domain. A helical membrane pass occupies residues 118–138 (VPVAVVLLPVFALTLVAVWAF). The Mitochondrial intermembrane portion of the chain corresponds to 139–145 (VRYRKQL).

In terms of assembly, binds (via the PDZ domain) to isoform 2A of SYNJ2 (via the unique motif in the C-terminus). Interacts (via C-terminus) with RALBP1. Interacts (via PDZ domain) with ACVR2A (via C-terminus) and ACVR2B (via C-terminus). Forms a ternary complex with ACVR2A and RALBP1. Interacts with MAPK12. Interacts with DLL1; enhances DLL1 protein stability, and promotes notch signaling in endothelial cells. Widely expressed.

It localises to the mitochondrion outer membrane. Its function is as follows. Regulates endocytosis of activin type 2 receptor kinases through the Ral/RALBP1-dependent pathway and may be involved in suppression of activin-induced signal transduction. The sequence is that of Synaptojanin-2-binding protein (Synj2bp) from Rattus norvegicus (Rat).